The chain runs to 107 residues: Small ribosomal subunit protein uS17 (107 aa).

The protein belongs to the universal ribosomal protein uS17 family. As to quaternary structure, part of the 30S ribosomal subunit.

In terms of biological role, one of the primary rRNA binding proteins, it binds specifically to the 5'-end of 16S ribosomal RNA. The chain is Small ribosomal subunit protein uS17 from Thermotoga petrophila (strain ATCC BAA-488 / DSM 13995 / JCM 10881 / RKU-1).